We begin with the raw amino-acid sequence, 116 residues long: Large ribosomal subunit protein bL17 (116 aa).

It belongs to the bacterial ribosomal protein bL17 family. Part of the 50S ribosomal subunit. Contacts protein L32.

In Helicobacter hepaticus (strain ATCC 51449 / 3B1), this protein is Large ribosomal subunit protein bL17.